The following is a 478-amino-acid chain: Metalloendopeptidase OMA1, mitochondrial (478 aa).

The interval L134 to F164 is stress-sensor region. A helical membrane pass occupies residues H163–L183. H296 contributes to the Zn(2+) binding site. The active site involves E297. Residues H300 and E361 each contribute to the Zn(2+) site. An intrachain disulfide couples C376 to C434.

It belongs to the peptidase M48 family. As to quaternary structure, homooligomer. It depends on Zn(2+) as a cofactor. Post-translationally, autocatalytically cleaved in response to mitochondrial depolarization both at the N-terminus and C-terminus to generate the short active form (S-OMA1). The S-OMA1 form is unstable. In terms of processing, may form a redox-dependent disulfide bond. Exists in a semi-oxidized state and is activated by prolonged hypoxia.

Its subcellular location is the mitochondrion inner membrane. Protease activity is activated upon autocatalytic cleavage in response to mitochondrial depolarization. Its function is as follows. Metalloprotease that is part of the quality control system in the inner membrane of mitochondria. Activated in response to various mitochondrial stress, leading to the proteolytic cleavage of target proteins, such as opa1 and dele1. Involved in the fusion of the mitochondrial inner membranes by mediating cleavage of opa1 at S1 position, generating the soluble opa1 (S-opa1), which cooperates with the membrane form (L-opa1) to coordinate the fusion of mitochondrial inner membranes. Following stress conditions that induce loss of mitochondrial membrane potential, mediates cleavage of opa1, leading to excess production of soluble opa1 (S-opa1) and negative regulation of mitochondrial fusion. Also acts as an activator of the integrated stress response (ISR): in response to mitochondrial stress, mediates cleavage of dele1 to generate the processed form of dele1 (S-DELE1), which translocates to the cytosol and activates eif2ak1/hri to trigger the ISR. Required for the stability of the respiratory supercomplexes. The protein is Metalloendopeptidase OMA1, mitochondrial of Danio rerio (Zebrafish).